We begin with the raw amino-acid sequence, 494 residues long: MKKIAFDSEKYLNLQRDHILERINQFEGKLYMEFGGKMLEDFHAARVLPGYEPDNKIRLLKELKDQVEIVIAINANNIEHSKARGDLGISYDQEVLRLIDTFNELDIYVGSVVITQYSGQPAADLFRSQLEKNGIASYIHYPIKGYPTDMDHIISPEGMGKNDYIKTSRNLVVVTAPGPGSGKLATCLSNMYHDQINGIKSGYAKFETFPVWNLPLHHPVNLAYEAATADLDDVNMIDPFHLQTYGKTTVNYNRDIEIFPVLKRMLERILGKSPYASPTDMGVNMVGFAIVDNDAAIEASQQEIIRRYYQTILDFKAERVSESAVKKIELLMNDLGITPLDRKVTVVARDKAESTGEPALALELPNGEIVTGKTSELFGPTAAVLINAIKKLAHIAKETKLIEPEYVKPIQGLKINHLGSRNPRLHSNEILMALAITAMENQDAANAMQQLGNLKGSEAHSTVTLTDEDKNVLRKLGIHVTMDPVYQYDRLYRK.

This sequence belongs to the UPF0371 family.

This Streptococcus sanguinis (strain SK36) protein is UPF0371 protein SSA_0208.